The chain runs to 188 residues: GMP synthase [glutamine-hydrolyzing] subunit A (188 aa).

The 186-residue stretch at 3–188 folds into the Glutamine amidotransferase type-1 domain; the sequence is PLYVVNNYGQ…FSICTGQNKG (186 aa). Cys-75 serves as the catalytic Nucleophile. Residues His-162 and Glu-164 contribute to the active site.

In terms of assembly, heterodimer composed of a glutamine amidotransferase subunit (A) and a GMP-binding subunit (B).

The catalysed reaction is XMP + L-glutamine + ATP + H2O = GMP + L-glutamate + AMP + diphosphate + 2 H(+). It functions in the pathway purine metabolism; GMP biosynthesis; GMP from XMP (L-Gln route): step 1/1. Catalyzes the synthesis of GMP from XMP. The chain is GMP synthase [glutamine-hydrolyzing] subunit A from Methanospirillum hungatei JF-1 (strain ATCC 27890 / DSM 864 / NBRC 100397 / JF-1).